Here is a 168-residue protein sequence, read N- to C-terminus: Transcription antitermination protein NusB (168 aa).

It belongs to the NusB family.

Involved in transcription antitermination. Required for transcription of ribosomal RNA (rRNA) genes. Binds specifically to the boxA antiterminator sequence of the ribosomal RNA (rrn) operons. This Deinococcus deserti (strain DSM 17065 / CIP 109153 / LMG 22923 / VCD115) protein is Transcription antitermination protein NusB.